The primary structure comprises 541 residues: Cyclin-T1-4 (541 aa).

The disordered stretch occupies residues Val277–Gly366. A compositionally biased stretch (polar residues) spans Ser307–Gly325. Residues Gln336–Pro354 are compositionally biased toward basic and acidic residues. A Phosphoserine modification is found at Ser396. The interval Glu445–Arg541 is disordered. Basic and acidic residues predominate over residues Met493–Ser511. The segment covering Lys519–Ser528 has biased composition (polar residues). Residues Tyr529 to Arg541 are compositionally biased toward basic and acidic residues.

Belongs to the cyclin family. Cyclin T subfamily.

The protein is Cyclin-T1-4 (CYCT1-4) of Arabidopsis thaliana (Mouse-ear cress).